Here is a 65-residue protein sequence, read N- to C-terminus: U2-theraphotoxin-Pc1a (65 aa).

The first 20 residues, 1-20 (MGFKLVLFIAVLTLVGSSNA), serve as a signal peptide directing secretion. Positions 21–36 (EISAKMDSRDSPMIQE) are excised as a propeptide. 3 disulfides stabilise this stretch: Cys-39–Cys-56, Cys-46–Cys-59, and Cys-55–Cys-64.

Belongs to the neurotoxin 36 family. 02 subfamily. As to expression, expressed by the venom gland.

Its subcellular location is the secreted. Functionally, possesses strong antiplasmodial activity against the intra-erythrocyte stage of P.falciparum in vitro. IC(50) for inhibiting P.falciparum growth is 1.15 uM. Specifically interacts with infected erythrocytes. Does not lyse erythrocytes, is not cytotoxic to nucleated mammalian cells, and does not inhibit neuromuscular function. Has neither antibacterial nor antifungal activity. In Psalmopoeus cambridgei (Trinidad chevron tarantula), this protein is U2-theraphotoxin-Pc1a.